A 147-amino-acid chain; its full sequence is Zinc finger HIT domain-containing protein 3 (147 aa).

Zn(2+)-binding residues include C3, C6, C14, C17, C22, C26, H30, and C34. Residues 3–34 (CVICLEKPKYRCPACRVPYCSVACFRKHKEQC) form an HIT-type zinc finger. The disordered stretch occupies residues 45–67 (IRSALPTKTXKPVENKDDDDSIA). S72 carries the post-translational modification Phosphoserine.

In terms of assembly, thyroid receptor interacting proteins (TRIPs) specifically interact with the ligand binding domain of the thyroid receptor (TR). Requires the presence of thyroid hormone for its interaction. Interacts with NUFIP1. Interacts (via HIT-type zinc finger) with the RUVBL1/RUVBL2 complex in the presence of ADP.

It localises to the cytoplasm. The protein resides in the nucleus. The polypeptide is Zinc finger HIT domain-containing protein 3 (ZNHIT3) (Macaca mulatta (Rhesus macaque)).